Reading from the N-terminus, the 205-residue chain is ATP phosphoribosyltransferase (205 aa).

Belongs to the ATP phosphoribosyltransferase family. Short subfamily.

Its subcellular location is the cytoplasm. It catalyses the reaction 1-(5-phospho-beta-D-ribosyl)-ATP + diphosphate = 5-phospho-alpha-D-ribose 1-diphosphate + ATP. The protein operates within amino-acid biosynthesis; L-histidine biosynthesis; L-histidine from 5-phospho-alpha-D-ribose 1-diphosphate: step 1/9. Catalyzes the condensation of ATP and 5-phosphoribose 1-diphosphate to form N'-(5'-phosphoribosyl)-ATP (PR-ATP). Has a crucial role in the pathway because the rate of histidine biosynthesis seems to be controlled primarily by regulation of HisG enzymatic activity. The chain is ATP phosphoribosyltransferase from Thermococcus gammatolerans (strain DSM 15229 / JCM 11827 / EJ3).